The sequence spans 328 residues: MSLQNLTRFPRLEFIGAPTPLEYLPRFSDYLGREIFIKRDDVTPLAMGGNKVRKLEFLAADALREGADTLVTAGAIQSNHVRQTAAVAAKLGLHCVALLENPIGTQAENYLSNGNRLLLDLFNVQVEMCAALDDPDAQLQELATRIEAQGFRPYVIPVGGSNALGALGYVESALEIAQQCEGAVNLSSVVVASGSAGTHAGLAVGLEHLLPETELIGVTVSRSVADQKPKVVALQQAVARELELSAAAEITLWDEYFAPGYGTPNEEGMEAVKLLARLEGILLDPVYTGKAMAGLIDGISQKRFKDQGPILFIHTGGAPALFAYHPHV.

Lys-51 carries the post-translational modification N6-(pyridoxal phosphate)lysine.

This sequence belongs to the ACC deaminase/D-cysteine desulfhydrase family. As to quaternary structure, homodimer. Pyridoxal 5'-phosphate is required as a cofactor.

It carries out the reaction D-cysteine + H2O = hydrogen sulfide + pyruvate + NH4(+) + H(+). In terms of biological role, catalyzes the alpha,beta-elimination reaction of D-cysteine and of several D-cysteine derivatives. It could be a defense mechanism against D-cysteine. The sequence is that of D-cysteine desulfhydrase from Escherichia fergusonii (strain ATCC 35469 / DSM 13698 / CCUG 18766 / IAM 14443 / JCM 21226 / LMG 7866 / NBRC 102419 / NCTC 12128 / CDC 0568-73).